We begin with the raw amino-acid sequence, 198 residues long: tRNA (pseudouridine(54)-N(1))-methyltransferase (198 aa).

S-adenosyl-L-methionine is bound by residues Leu-134 and Gly-155.

The protein belongs to the methyltransferase superfamily. TrmY family. Homodimer.

It is found in the cytoplasm. The enzyme catalyses pseudouridine(54) in tRNA + S-adenosyl-L-methionine = N(1)-methylpseudouridine(54) in tRNA + S-adenosyl-L-homocysteine + H(+). Specifically catalyzes the N1-methylation of pseudouridine at position 54 (Psi54) in tRNAs. The chain is tRNA (pseudouridine(54)-N(1))-methyltransferase from Thermococcus kodakarensis (strain ATCC BAA-918 / JCM 12380 / KOD1) (Pyrococcus kodakaraensis (strain KOD1)).